The following is a 194-amino-acid chain: Protein GrpE (194 aa).

The protein belongs to the GrpE family. As to quaternary structure, homodimer.

It localises to the cytoplasm. In terms of biological role, participates actively in the response to hyperosmotic and heat shock by preventing the aggregation of stress-denatured proteins, in association with DnaK and GrpE. It is the nucleotide exchange factor for DnaK and may function as a thermosensor. Unfolded proteins bind initially to DnaJ; upon interaction with the DnaJ-bound protein, DnaK hydrolyzes its bound ATP, resulting in the formation of a stable complex. GrpE releases ADP from DnaK; ATP binding to DnaK triggers the release of the substrate protein, thus completing the reaction cycle. Several rounds of ATP-dependent interactions between DnaJ, DnaK and GrpE are required for fully efficient folding. This Aliivibrio fischeri (strain MJ11) (Vibrio fischeri) protein is Protein GrpE.